The chain runs to 383 residues: uncharacterized protein (383 aa).

The interval 1–55 (MSSKLTVNAHYSPLKDEDPLDHIDSQTALDSMETDSTGKSSLYFSKSDDPLSKDI) is disordered. Residues 13-24 (PLKDEDPLDHID) are compositionally biased toward basic and acidic residues. Positions 25-44 (SQTALDSMETDSTGKSSLYF) are enriched in polar residues. Basic and acidic residues predominate over residues 46-55 (KSDDPLSKDI). The next 10 membrane-spanning stretches (helical) occupy residues 87 to 107 (LTIF…TILN), 112 to 132 (NIIN…SLMV), 157 to 177 (FIFV…FVPV), 179 to 199 (FYQI…FVLL), 205 to 225 (LFPF…VRFE), 228 to 248 (VAPI…IESV), 262 to 282 (LIYI…VASL), 299 to 319 (FFIV…ATFT), 329 to 349 (YMIS…AFLG), and 352 to 372 (LYGN…LYTL).

The protein belongs to the TPT transporter family.

Its subcellular location is the membrane. This is an uncharacterized protein from Schizosaccharomyces pombe (strain 972 / ATCC 24843) (Fission yeast).